The chain runs to 493 residues: MFS-type transporter efuF (493 aa).

Helical transmembrane passes span 90-110 (ITLV…NMLL), 117-137 (IMLP…CAVH), 147-167 (LLMG…LTTF), 179-199 (IFYG…YGVF), 211-231 (FLMI…YWHL), 279-299 (IALY…VGNF), 316-336 (LYTV…CTSS), 343-363 (STHL…LITL), 370-390 (GPTY…SCIF), 406-426 (AVTG…SLAF), and 435-455 (IPAL…VLGF).

This sequence belongs to the major facilitator superfamily.

The protein resides in the membrane. In terms of biological role, MFS-type transporter; part of the gene cluster that mediates the biosynthesis of enfumafungin, a glycosylated fernene-type triterpenoid with potent antifungal activity, mediated by its interaction with beta-1,3-glucan synthase and the fungal cell wall. Might facilitate the transport of glucose units to the subcellular site of enfumafungin biosynthesis. In Hormonema carpetanum, this protein is MFS-type transporter efuF.